A 325-amino-acid polypeptide reads, in one-letter code: 2-dehydro-3-deoxygluconokinase (325 aa).

Residues 49–53 (GSEAN), Tyr-105, 121–123 (YYR), and Arg-181 each bind substrate. Residues 179 to 181 (NIR), 240 to 245 (KLGAEG), and 269 to 272 (GAGD) contribute to the ATP site. Residues Asp-272 and Asp-308 each coordinate substrate. Asp-272 (proton acceptor) is an active-site residue.

The protein belongs to the carbohydrate kinase PfkB family. Homohexamer; trimer of dimers.

It catalyses the reaction 2-dehydro-3-deoxy-D-gluconate + ATP = 2-dehydro-3-deoxy-6-phospho-D-gluconate + ADP + H(+). Its pathway is carbohydrate acid metabolism; 2-dehydro-3-deoxy-D-gluconate degradation; D-glyceraldehyde 3-phosphate and pyruvate from 2-dehydro-3-deoxy-D-gluconate: step 1/2. Involved in the degradation of glucose via the semi-phosphorylative Entner-Doudoroff pathway. Catalyzes the phosphorylation of 2-keto-3-deoxygluconate (KDG) yielding 2-keto-3-deoxy-6-phosphogluconate (KDPG). In Thermoproteus tenax, this protein is 2-dehydro-3-deoxygluconokinase (kdgK).